The chain runs to 494 residues: UPF0371 protein SP_0341 (494 aa).

This sequence belongs to the UPF0371 family.

In Streptococcus pneumoniae serotype 4 (strain ATCC BAA-334 / TIGR4), this protein is UPF0371 protein SP_0341.